The chain runs to 450 residues: MSDRDSQNDLGAKVFVLVTGANSGLGFSICCRLVDEFLKSHRHPRESLTVIFTTRSTRKGNDTLLRLQDHLRRASASASAPAAASARVTFVAENVDLSNLVSVRALSRRLNKTFPKLDAIVLNAGLGGWTGINWPKAIWGVMTDLVHEVSWPSFKIAPAGMVTDAQTALGDDKEPRLGAVFCANVFGHYMLAHNAMPLLRHSDMLHGPGRIIWVSSLEATVKHLDIDDIQGLRTLAPYESSKALTDILALTADLPSTAPWVKSFYSVDEQPEPRKETELEPPHPNMFLTHPGICGTGILPLSWPLFYSMLAAFWLARLLGSPWHTISTYAGACAPVWLALSAQAVLDDAEAPYRRNGGGRVKWGSSCNRLGQDQPVCTEVDGWGYGGVVGPAILEGDRRRRRKRGAVDLTAEEKLQYEDLGRKCWQRMEELRIQWDELLDEAEAQAKSEA.

The NADP(+) site is built by leucine 25, threonine 53, and lysine 59. Residues serine 215 and tyrosine 238 each act as proton donor in the active site. Residues tyrosine 238, lysine 242, and threonine 296 each coordinate NADP(+). The active-site Lowers pKa of active site Tyr is lysine 242.

The protein belongs to the short-chain dehydrogenases/reductases (SDR) family. ERG27 subfamily. Heterotetramer of erg25, erg26, erg27 and erg28. Erg28 acts as a scaffold to tether erg27 and other 4,4-demethylation-related enzymes, forming a demethylation enzyme complex, in the endoplasmic reticulum.

The protein localises to the endoplasmic reticulum membrane. It localises to the lipid droplet. The protein operates within steroid metabolism; ergosterol biosynthesis. Its function is as follows. Sterol-C4-methyl oxidase; part of the third module of ergosterol biosynthesis pathway that includes the late steps of the pathway. Erg27 is a catalytic component of the C-4 demethylation complex that catalyzes the conversion of 4,4-dimethylfecosterol into fecosterol via 4-methylfecosterol. The third module or late pathway involves the ergosterol synthesis itself through consecutive reactions that mainly occur in the endoplasmic reticulum (ER) membrane. Firstly, the squalene synthase erg9 catalyzes the condensation of 2 farnesyl pyrophosphate moieties to form squalene, which is the precursor of all steroids. Squalene synthase is crucial for balancing the incorporation of farnesyl diphosphate (FPP) into sterol and nonsterol isoprene synthesis. Secondly, squalene is converted into lanosterol by the consecutive action of the squalene epoxidase erg1 and the lanosterol synthase erg7. Then, the delta(24)-sterol C-methyltransferase erg6 methylates lanosterol at C-24 to produce eburicol. Eburicol is the substrate of the sterol 14-alpha demethylase encoded by cyp51A and cyp51B, to yield 4,4,24-trimethyl ergosta-8,14,24(28)-trienol. The C-14 reductase erg24 then reduces the C14=C15 double bond which leads to 4,4-dimethylfecosterol. A sequence of further demethylations at C-4, involving the C-4 demethylation complex containing the C-4 methylsterol oxidases erg25A or erg25B, the sterol-4-alpha-carboxylate 3-dehydrogenase erg26 and the 3-keto-steroid reductase erg27, leads to the production of fecosterol via 4-methylfecosterol. The C-8 sterol isomerase erg2 then catalyzes the reaction which results in unsaturation at C-7 in the B ring of sterols and thus converts fecosterol to episterol. The sterol-C5-desaturase erg3B then catalyzes the introduction of a C-5 double bond in the B ring to produce 5-dehydroepisterol. The 2 other sterol-C5-desaturases, erg3A and erg3C, seem to be less important in ergosterol biosynthesis. The C-22 sterol desaturase erg5 further converts 5-dehydroepisterol into ergosta-5,7,22,24(28)-tetraen-3beta-ol by forming the C-22(23) double bond in the sterol side chain. Finally, ergosta-5,7,22,24(28)-tetraen-3beta-ol is substrate of the C-24(28) sterol reductases erg4A and erg4B to produce ergosterol. Possible alternative sterol biosynthetic pathways might exist from fecosterol to ergosterol, depending on the activities of the erg3 isoforms. The sequence is that of 3-keto-steroid reductase erg27 from Aspergillus fumigatus (strain ATCC MYA-4609 / CBS 101355 / FGSC A1100 / Af293) (Neosartorya fumigata).